The primary structure comprises 193 residues: Sorting nexin-22 (193 aa).

The disordered stretch occupies residues methionine 1–glutamate 21. In terms of domain architecture, PX spans methionine 1–asparagine 118. Residues arginine 43, serine 45, lysine 66, and arginine 79 each coordinate a 1,2-diacyl-sn-glycero-3-phospho-(1D-myo-inositol-3-phosphate).

It belongs to the sorting nexin family. In terms of assembly, (Microbial infection) Interacts with P.falciparum (strain 3D7) CK1. In terms of tissue distribution, expressed in erythrocytes (at protein level).

It is found in the cytoplasmic vesicle membrane. Functionally, may be involved in several stages of intracellular trafficking. Interacts with membranes containing phosphatidylinositol 3-phosphate (PtdIns(3P)). The protein is Sorting nexin-22 (SNX22) of Homo sapiens (Human).